The following is a 234-amino-acid chain: MPVFRLTEELIFPPSYLAERDGLLAVGGDLSAERLLLAYRQGIFPWYTEKTPILWWSPDPRLVLFPAELKISISLRRVLRKNVFSVTFDRAFADVIRRCAEVRRARDDSTWIVPGMVTAYSRLHRLGYAHSVESWHEGELVGGLYGVALGRVFYGESMFTRKTDASKVALVHLVDLLTRGGFQLIDCQVTTAHLQSMGAREISRRRFLTLLAENIPEVVHGESWEGESCCGKRP.

This sequence belongs to the L/F-transferase family.

The protein localises to the cytoplasm. It catalyses the reaction N-terminal L-lysyl-[protein] + L-leucyl-tRNA(Leu) = N-terminal L-leucyl-L-lysyl-[protein] + tRNA(Leu) + H(+). The catalysed reaction is N-terminal L-arginyl-[protein] + L-leucyl-tRNA(Leu) = N-terminal L-leucyl-L-arginyl-[protein] + tRNA(Leu) + H(+). It carries out the reaction L-phenylalanyl-tRNA(Phe) + an N-terminal L-alpha-aminoacyl-[protein] = an N-terminal L-phenylalanyl-L-alpha-aminoacyl-[protein] + tRNA(Phe). Functions in the N-end rule pathway of protein degradation where it conjugates Leu, Phe and, less efficiently, Met from aminoacyl-tRNAs to the N-termini of proteins containing an N-terminal arginine or lysine. The chain is Leucyl/phenylalanyl-tRNA--protein transferase from Syntrophobacter fumaroxidans (strain DSM 10017 / MPOB).